Here is a 353-residue protein sequence, read N- to C-terminus: Glucose import ATP-binding protein GlcV (353 aa).

The 238-residue stretch at 4–241 folds into the ABC transporter domain; that stretch reads IIVKNVSKVF…PVSIQVASLI (238 aa). Residues 40–46, glutamine 89, and glutamate 166 each bind ATP; that span reads SGAGKTT.

Belongs to the ABC transporter superfamily. In terms of assembly, the complex is composed of two ATP-binding proteins (GlcV), two transmembrane proteins (GlcT and GlcU) and a solute-binding protein (GlcS). Forms transient head-to-tail homodimers in the presence of ATP-Mg(2+).

Its subcellular location is the cell membrane. It carries out the reaction D-glucose(out) + ATP + H2O = D-glucose(in) + ADP + phosphate + H(+). Part of the ABC transporter complex GlcSTUV involved in glucose uptake. Responsible for energy coupling to the transport system. In vitro, as a free subunit, exhibits a constitutive ATPase activity. The sequence is that of Glucose import ATP-binding protein GlcV from Saccharolobus solfataricus (strain ATCC 35092 / DSM 1617 / JCM 11322 / P2) (Sulfolobus solfataricus).